The primary structure comprises 198 residues: Probable minor pilin MMP0709 (198 aa).

The propeptide occupies 1–5; sequence MSNRG. The short motif at 6 to 14 is the QXSXEXXXL element; it reads QLSIEMVIL.

In terms of processing, the N-terminus is probably cleaved by the prepilin peptidase EppA, which recognizes the class III signal sequence.

Its subcellular location is the secreted. The protein localises to the cell surface. It localises to the fimbrium. The sequence is that of Probable minor pilin MMP0709 from Methanococcus maripaludis (strain DSM 14266 / JCM 13030 / NBRC 101832 / S2 / LL).